The primary structure comprises 448 residues: Guanine deaminase (448 aa).

Zn(2+)-binding residues include His-74 and His-76. Substrate-binding positions include 76 to 79 (HAPQ), 204 to 205 (RF), 231 to 234 (HISE), and Asp-319. The Zn(2+) site is built by His-231 and Asp-319.

This sequence belongs to the metallo-dependent hydrolases superfamily. ATZ/TRZ family. The cofactor is Zn(2+).

The catalysed reaction is guanine + H2O + H(+) = xanthine + NH4(+). It functions in the pathway purine metabolism; guanine degradation; xanthine from guanine: step 1/1. With respect to regulation, strongly inhibited by p-chloromercuribenzoate (PCMB). Potassium cyanide (KCN) strongly inhibits activity towards 7,8-dihydropterin but has almost no effect on activity towards guanine. Pterin inhibits activity towards guanine but has little effect on activity towards 7,8-dihydropterin. In terms of biological role, catalyzes the hydrolytic deamination of guanine, producing xanthine and ammonia. Also has 7,8-dihydropterin deaminase activity, which plays a role in synthesis of the red eye pigment aurodrosopterin. The polypeptide is Guanine deaminase (Drosophila melanogaster (Fruit fly)).